A 511-amino-acid chain; its full sequence is Pickpocket protein 19 (511 aa).

The next 2 membrane-spanning stretches (helical) occupy residues 59 to 79 (LWLA…TVLM) and 471 to 491 (GIIS…LFVL).

The protein belongs to the amiloride-sensitive sodium channel (TC 1.A.6) family. As to expression, expressed in the tracheal system. Expressed in the taste-sensing terminal organ of the larval head. In adults, expressed in hairs on the tibia, femur and wing margin, but not in hairs on the tarsi of the leg.

It localises to the membrane. In terms of biological role, part of a complex that plays a role in tracheal liquid clearance. In both larvae and adults, contributes to the behavioral response to salt. Probable role in sodium transport. The sequence is that of Pickpocket protein 19 (ppk19) from Drosophila melanogaster (Fruit fly).